A 341-amino-acid polypeptide reads, in one-letter code: GTPase Obg (341 aa).

Positions 2-160 (SGFIDEVPIQ…FSLILELKLL (159 aa)) constitute an Obg domain. The region spanning 161–330 (ADIGIVGLPN…LLERIDKVFF (170 aa)) is the OBG-type G domain. GTP is bound by residues 167–174 (GLPNAGKS), 192–196 (FTTLS), 215–218 (DIPG), 282–285 (NKMD), and 311–313 (SAD). The Mg(2+) site is built by S174 and T194.

Belongs to the TRAFAC class OBG-HflX-like GTPase superfamily. OBG GTPase family. As to quaternary structure, monomer. It depends on Mg(2+) as a cofactor.

The protein localises to the cytoplasm. Its function is as follows. An essential GTPase which binds GTP, GDP and possibly (p)ppGpp with moderate affinity, with high nucleotide exchange rates and a fairly low GTP hydrolysis rate. Plays a role in control of the cell cycle, stress response, ribosome biogenesis and in those bacteria that undergo differentiation, in morphogenesis control. This Leptospira biflexa serovar Patoc (strain Patoc 1 / Ames) protein is GTPase Obg.